A 92-amino-acid chain; its full sequence is DNA-binding protein HU (92 aa).

A disordered region spans residues 58–92 (AGTARNPRTGETVNRPASKTARFQVGEGLKSSLNS).

The protein belongs to the bacterial histone-like protein family. As to quaternary structure, homodimer.

Histone-like DNA-binding protein which is capable of wrapping DNA to stabilize it, and thus to prevent its denaturation under extreme environmental conditions. The protein is DNA-binding protein HU (hup) of Caulobacter vibrioides (strain ATCC 19089 / CIP 103742 / CB 15) (Caulobacter crescentus).